The sequence spans 142 residues: Large ribosomal subunit protein uL11 (142 aa).

Belongs to the universal ribosomal protein uL11 family. In terms of assembly, part of the ribosomal stalk of the 50S ribosomal subunit. Interacts with L10 and the large rRNA to form the base of the stalk. L10 forms an elongated spine to which L12 dimers bind in a sequential fashion forming a multimeric L10(L12)X complex. Post-translationally, one or more lysine residues are methylated.

Its function is as follows. Forms part of the ribosomal stalk which helps the ribosome interact with GTP-bound translation factors. The protein is Large ribosomal subunit protein uL11 of Nitrobacter winogradskyi (strain ATCC 25391 / DSM 10237 / CIP 104748 / NCIMB 11846 / Nb-255).